We begin with the raw amino-acid sequence, 411 residues long: Gamma-glutamyl phosphate reductase (411 aa).

It belongs to the gamma-glutamyl phosphate reductase family.

Its subcellular location is the cytoplasm. The catalysed reaction is L-glutamate 5-semialdehyde + phosphate + NADP(+) = L-glutamyl 5-phosphate + NADPH + H(+). The protein operates within amino-acid biosynthesis; L-proline biosynthesis; L-glutamate 5-semialdehyde from L-glutamate: step 2/2. Its function is as follows. Catalyzes the NADPH-dependent reduction of L-glutamate 5-phosphate into L-glutamate 5-semialdehyde and phosphate. The product spontaneously undergoes cyclization to form 1-pyrroline-5-carboxylate. The protein is Gamma-glutamyl phosphate reductase of Nautilia profundicola (strain ATCC BAA-1463 / DSM 18972 / AmH).